We begin with the raw amino-acid sequence, 365 residues long: Class I histocompatibility antigen, Gogo-C*0101/C*0102 alpha chain (365 aa).

The signal sequence occupies residues 1–24; it reads MRVMAPRTLILLLSGALALTETWA. The tract at residues 25 to 114 is alpha-1; the sequence is GSHSMRYFFT…LRGYYNQSED (90 aa). Residues 25 to 308 lie on the Extracellular side of the membrane; it reads GSHSMRYFFT…EPSSQPTIPI (284 aa). The N-linked (GlcNAc...) asparagine glycan is linked to Asn-110. The alpha-2 stretch occupies residues 115–206; the sequence is GSHTFQRMYG…ENGKETLQRA (92 aa). Cystine bridges form between Cys-125–Cys-188 and Cys-227–Cys-283. The tract at residues 207–298 is alpha-3; the sequence is DPPKTHVTHH…GLLEPLTLRW (92 aa). The Ig-like C1-type domain occupies 209–297; it reads PKTHVTHHPI…KGLLEPLTLR (89 aa). Residues 299 to 308 form a connecting peptide region; the sequence is EPSSQPTIPI. The helical transmembrane segment at 309–332 threads the bilayer; the sequence is VGIVAGLAVLAVVFTGTVVAAVMC. The Cytoplasmic segment spans residues 333–365; it reads RRKSSGGKGGSCSQAACSNSAQGSDESLIACKA. Residues Ser-356 and Ser-359 each carry the phosphoserine modification.

This sequence belongs to the MHC class I family. In terms of assembly, heterodimer of an alpha chain and a beta chain (beta-2-microglobulin).

The protein localises to the membrane. Its function is as follows. Involved in the presentation of foreign antigens to the immune system. The polypeptide is Class I histocompatibility antigen, Gogo-C*0101/C*0102 alpha chain (Gorilla gorilla gorilla (Western lowland gorilla)).